A 942-amino-acid chain; its full sequence is tRNAse Z TRZ4, mitochondrial (942 aa).

The transit peptide at 1–50 directs the protein to the mitochondrion; that stretch reads MLTSSMPQNLSLFGFSPLKSSSFALILRPFSLYPPIFASSSPAPSRRPPR. The interval 38-85 is disordered; it reads ASSSPAPSRRPPRTAGYRRSGPSPPRRKWSSFEEQKRKGRSPMEKDKA. A compositionally biased stretch (basic and acidic residues) spans 67-85; the sequence is SSFEEQKRKGRSPMEKDKA.

This sequence belongs to the RNase Z family. As to quaternary structure, homodimer. Zn(2+) is required as a cofactor. The cofactor is Ca(2+). Requires Mn(2+) as cofactor. It depends on Mg(2+) as a cofactor.

Its subcellular location is the mitochondrion. The enzyme catalyses Endonucleolytic cleavage of RNA, removing extra 3' nucleotides from tRNA precursor, generating 3' termini of tRNAs. A 3'-hydroxy group is left at the tRNA terminus and a 5'-phosphoryl group is left at the trailer molecule.. Its function is as follows. Zinc phosphodiesterase, which displays tRNA 3'-processing endonuclease activity. Involved in tRNA maturation, by removing a 3'-trailer from precursor tRNA. Can process the mitochondrial tRNA-like structures (t-elements). This is tRNAse Z TRZ4, mitochondrial from Arabidopsis thaliana (Mouse-ear cress).